A 330-amino-acid polypeptide reads, in one-letter code: Peroxidase N1 (330 aa).

Residues 1-29 (MEYYHHSINKMAMFMVILVLAIDVTMVLG) form the signal peptide. Gln-30 is modified (pyrrolidone carboxylic acid). Cystine bridges form between Cys-41–Cys-117, Cys-74–Cys-79, Cys-123–Cys-326, and Cys-201–Cys-233. Residue His-72 is the Proton acceptor of the active site. Ca(2+) contacts are provided by Asp-73, Val-76, Gly-78, Asp-80, and Ser-82. Substrate is bound at residue Pro-164. Residue His-194 participates in heme b binding. Ca(2+) is bound at residue Thr-195. Asn-212 is a glycosylation site (N-linked (GlcNAc...) asparagine). Asp-246 and Asp-254 together coordinate Ca(2+).

This sequence belongs to the peroxidase family. Classical plant (class III) peroxidase subfamily. It depends on Ca(2+) as a cofactor. Requires heme b as cofactor. As to expression, expressed at a high level in roots and at a trace level in lower leaves. Not expressed in upper leaves, stems, flowers, seeds and shoot apices.

The protein localises to the secreted. The catalysed reaction is 2 a phenolic donor + H2O2 = 2 a phenolic radical donor + 2 H2O. In terms of biological role, removal of H(2)O(2), oxidation of toxic reductants, biosynthesis and degradation of lignin, suberization, auxin catabolism, response to environmental stresses such as wounding, pathogen attack and oxidative stress. These functions might be dependent on each isozyme/isoform in each plant tissue. Can use NADH, NADPH and monolignols as substrates. The protein is Peroxidase N1 of Nicotiana tabacum (Common tobacco).